We begin with the raw amino-acid sequence, 603 residues long: UvrABC system protein C (603 aa).

One can recognise a GIY-YIG domain in the interval 15 to 92; sequence DQPGCYLMKD…IKKHDPRFNI (78 aa). The region spanning 197-232 is the UVR domain; the sequence is KTVKNDLMKKMQEAAENMEFEKAGEFRDQINAIETT.

Belongs to the UvrC family. Interacts with UvrB in an incision complex.

The protein localises to the cytoplasm. Functionally, the UvrABC repair system catalyzes the recognition and processing of DNA lesions. UvrC both incises the 5' and 3' sides of the lesion. The N-terminal half is responsible for the 3' incision and the C-terminal half is responsible for the 5' incision. This chain is UvrABC system protein C, found in Listeria monocytogenes serotype 4b (strain F2365).